Consider the following 370-residue polypeptide: Uroporphyrinogen decarboxylase (370 aa).

Substrate-binding positions include 29-33, Asp79, Tyr155, Ser210, and His342; that span reads RQAGR.

Belongs to the uroporphyrinogen decarboxylase family. In terms of assembly, homodimer.

It localises to the cytoplasm. It carries out the reaction uroporphyrinogen III + 4 H(+) = coproporphyrinogen III + 4 CO2. It functions in the pathway porphyrin-containing compound metabolism; protoporphyrin-IX biosynthesis; coproporphyrinogen-III from 5-aminolevulinate: step 4/4. Its function is as follows. Catalyzes the decarboxylation of four acetate groups of uroporphyrinogen-III to yield coproporphyrinogen-III. This chain is Uroporphyrinogen decarboxylase, found in Acidovorax sp. (strain JS42).